The sequence spans 215 residues: MAKKNSNKQQEILDYVYKCVHENGYPPSVREICSAVGFKSTSTVHSYLQKLIDKGHLQKDPTKPRAIKILNKTSQVQENRTNKEGYYTSREMVDVPVVGRVTAGQPILAVENITDTFPLPVDFVQNSDAFMLRIQGESMIDAGILDKDFVLVRQQSSANNGDIVVALIGDEATCKTFYREKDHIRLQPQNSSMEPIVVKDELSILGKVIGVFRRM.

A DNA-binding region (H-T-H motif) is located at residues 29–49; sequence VREICSAVGFKSTSTVHSYLQ. Active-site for autocatalytic cleavage activity residues include serine 138 and lysine 175.

This sequence belongs to the peptidase S24 family. In terms of assembly, homodimer.

The catalysed reaction is Hydrolysis of Ala-|-Gly bond in repressor LexA.. Functionally, represses a number of genes involved in the response to DNA damage (SOS response), including recA and lexA. In the presence of single-stranded DNA, RecA interacts with LexA causing an autocatalytic cleavage which disrupts the DNA-binding part of LexA, leading to derepression of the SOS regulon and eventually DNA repair. The polypeptide is LexA repressor (Ruminiclostridium cellulolyticum (strain ATCC 35319 / DSM 5812 / JCM 6584 / H10) (Clostridium cellulolyticum)).